Here is a 95-residue protein sequence, read N- to C-terminus: Ribonuclease P protein component 1 (95 aa).

Belongs to the eukaryotic/archaeal RNase P protein component 1 family. Consists of a catalytic RNA component and at least 4 protein subunits. Forms a subcomplex with Rnp4 which stimulates the catalytic RNA.

The protein resides in the cytoplasm. It carries out the reaction Endonucleolytic cleavage of RNA, removing 5'-extranucleotides from tRNA precursor.. In terms of biological role, part of ribonuclease P, a protein complex that generates mature tRNA molecules by cleaving their 5'-ends. In Methanocaldococcus jannaschii (strain ATCC 43067 / DSM 2661 / JAL-1 / JCM 10045 / NBRC 100440) (Methanococcus jannaschii), this protein is Ribonuclease P protein component 1.